We begin with the raw amino-acid sequence, 148 residues long: FAD synthase (148 aa).

Residues 14 to 15, 19 to 22, and Asp-100 each bind ATP; these read VF and HAGH.

It belongs to the archaeal FAD synthase family. Homodimer. Requires a divalent metal cation as cofactor.

It catalyses the reaction FMN + ATP + H(+) = FAD + diphosphate. The protein operates within cofactor biosynthesis; FAD biosynthesis; FAD from FMN: step 1/1. Catalyzes the transfer of the AMP portion of ATP to flavin mononucleotide (FMN) to produce flavin adenine dinucleotide (FAD) coenzyme. This chain is FAD synthase, found in Pyrococcus horikoshii (strain ATCC 700860 / DSM 12428 / JCM 9974 / NBRC 100139 / OT-3).